We begin with the raw amino-acid sequence, 375 residues long: Succinyl-diaminopimelate desuccinylase (375 aa).

Histidine 66 contributes to the Zn(2+) binding site. Aspartate 68 is an active-site residue. Aspartate 99 is a binding site for Zn(2+). The active-site Proton acceptor is the glutamate 133. Zn(2+) is bound by residues glutamate 134, glutamate 162, and histidine 348.

The protein belongs to the peptidase M20A family. DapE subfamily. Homodimer. Requires Zn(2+) as cofactor. Co(2+) serves as cofactor.

The enzyme catalyses N-succinyl-(2S,6S)-2,6-diaminopimelate + H2O = (2S,6S)-2,6-diaminopimelate + succinate. The protein operates within amino-acid biosynthesis; L-lysine biosynthesis via DAP pathway; LL-2,6-diaminopimelate from (S)-tetrahydrodipicolinate (succinylase route): step 3/3. Functionally, catalyzes the hydrolysis of N-succinyl-L,L-diaminopimelic acid (SDAP), forming succinate and LL-2,6-diaminopimelate (DAP), an intermediate involved in the bacterial biosynthesis of lysine and meso-diaminopimelic acid, an essential component of bacterial cell walls. This is Succinyl-diaminopimelate desuccinylase from Yersinia pseudotuberculosis serotype O:1b (strain IP 31758).